We begin with the raw amino-acid sequence, 467 residues long: MKFSSTTLLAGLSSLTATVSAGCSFEGGNYYCSETKKVIYKGIGFSGTYMDVTNMDESTGKCTQQSYSFSGNLSPLDEELSVHFRGPLTLLQFGVYYPSSSGNSKRQIDDQDCNVKHVHHKHKRATEVVQVTQTVFVDGNGNTVTSQALQTSTVESSPAVSSAAADDNANSGSGSGSSAGSGSGYGSVSALDGEGKAYRSDISTKSAPTSTSAQPSSSETASVDGAWTRDSYYTPGSTDNCVFLNYHGGSGSGVWSAKFGNSLSYANADNSGGSSTPVPLEETTIKSGEEYIIFSGSKCGSSSDCGYYRKGTVAYHGFKGASKIFVFEFEMPSDTNGNGYNQDMPAVWLLNAKIPRTLQYGEATCSCWKTGCGELDLFEVLSSGSNKMISHLHDGQGSSQNSNNGGGGSQDYFERPTSGTFKGVVIFEGDEIHILQVDDETEFGSSLDEETVNAWLKEAGSVATIGY.

A signal peptide spans 1-21 (MKFSSTTLLAGLSSLTATVSA). Low complexity predominate over residues 158–172 (PAVSSAAADDNANSG). 2 disordered regions span residues 158–187 (PAVS…GYGS) and 200–223 (SDIS…TASV). Residues 173-185 (SGSGSSAGSGSGY) are compositionally biased toward gly residues. Positions 203–222 (STKSAPTSTSAQPSSSETAS) are enriched in low complexity. The ExDxxE motif motif lies at 374–379 (ELDLFE). The segment at 391 to 413 (HLHDGQGSSQNSNNGGGGSQDYF) is disordered.

Belongs to the PGA52 family. Post-translationally, cleaved by KEX2 in vitro.

The protein resides in the secreted. The enzyme catalyses Hydrolysis of (1-&gt;3)-beta-D-glucosidic linkages in (1-&gt;3)-beta-D-glucans.. Its function is as follows. Probable circularly permuted 1,3-beta-glucanase involved in cell wall modification through beta-1,3-glucan network alterations such as increased branching or remodeling. Plays a role in engulfment by host macrophages. The polypeptide is Probable circularly permuted 1,3-beta-glucanase TOS1 (Candida albicans (strain SC5314 / ATCC MYA-2876) (Yeast)).